The primary structure comprises 566 residues: Protein OBERON 1 (566 aa).

Positions 1 to 10 are enriched in polar residues; that stretch reads MGTSSGSNLP. The segment at 1-79 is disordered; it reads MGTSSGSNLP…KTGPDSHDQH (79 aa). Residues 18-29 show a composition bias toward low complexity; it reads QQLQTSLSLVSS. Residues 47-60 show a composition bias toward polar residues; that stretch reads ESASSQETWPTSKS. Positions 64–79 are enriched in basic and acidic residues; the sequence is RKTDSGKTGPDSHDQH. A PHD-type zinc finger spans residues 225-289; sequence LCMCVICNKF…LFKCRACNHT (65 aa). Residues 407 to 522 are a coiled coil; it reads EEKTRMYKKA…LFEKIKEQES (116 aa). The disordered stretch occupies residues 545–566; sequence YNASSPRVDPRSNQRNPFRSNP. A compositionally biased stretch (polar residues) spans 555 to 566; the sequence is RSNQRNPFRSNP.

Self-interacts. Interacts with OBE2, OBE3 and OBE4. Binds to VPg of pea seed borne mosaic virus (PSbMV), turnip mosaic virus (TuMV) and lettuce mosaic virus (LMV), but not with VPg of tobacco etch virus (TEV), cowpea mosaic virus (CPMV), tomato black ring virus (TBRV) and grapevine fan leaf virus (GFLV). Interacts with RBL. Expressed in roots, seedlings, stems, leaves, flowers and siliques, especially in the vasculature.

Its subcellular location is the nucleus. The protein localises to the nucleoplasm. In terms of biological role, probable transcription factor that acts together with OBE2 for the maintenance and/or establishment of both the shoot and root meristems, probably by controlling the expression of the meristem genes such as WUS, PLT1 and PLT2 and of genes required for auxin responses. Promotes cell meristematic activity via the WUSCHEL-CLAVATA pathway. Involved in the development of the basal pole and in auxin-mediated root and vascular development in the embryo. Confers sensitivity to turnip mosaic virus (TuMV) probably by promoting viral movement and multiplication via interaction with TuMV VPg. In Arabidopsis thaliana (Mouse-ear cress), this protein is Protein OBERON 1.